The primary structure comprises 798 residues: Phenylalanine--tRNA ligase beta subunit (798 aa).

A tRNA-binding domain is found at 39–148 (NPIFDGFLVG…EDIPIGKKIN (110 aa)). A B5 domain is found at 402–477 (SCSNKIKLYH…RIYNYNNIPL (76 aa)). Mg(2+) contacts are provided by aspartate 455, aspartate 461, and aspartate 465. The FDX-ACB domain occupies 704–797 (SKYPTSRRDI…LKKKFQVVLR (94 aa)).

It belongs to the phenylalanyl-tRNA synthetase beta subunit family. Type 1 subfamily. In terms of assembly, tetramer of two alpha and two beta subunits. Mg(2+) is required as a cofactor.

It localises to the cytoplasm. It catalyses the reaction tRNA(Phe) + L-phenylalanine + ATP = L-phenylalanyl-tRNA(Phe) + AMP + diphosphate + H(+). This is Phenylalanine--tRNA ligase beta subunit (pheT) from Buchnera aphidicola subsp. Schizaphis graminum (strain Sg).